Reading from the N-terminus, the 204-residue chain is Small ribosomal subunit protein uS4 (204 aa).

Positions 94 to 157 constitute an S4 RNA-binding domain; that stretch reads RRLDNVVYRL…KKLEVFKENL (64 aa).

It belongs to the universal ribosomal protein uS4 family. Part of the 30S ribosomal subunit. Contacts protein S5. The interaction surface between S4 and S5 is involved in control of translational fidelity.

Functionally, one of the primary rRNA binding proteins, it binds directly to 16S rRNA where it nucleates assembly of the body of the 30S subunit. Its function is as follows. With S5 and S12 plays an important role in translational accuracy. This Sulfurihydrogenibium sp. (strain YO3AOP1) protein is Small ribosomal subunit protein uS4.